A 545-amino-acid polypeptide reads, in one-letter code: MAKEIIFSDEARNKLYEGVKKLNDAVKVTMGPRGRNVLIQKSFGAPSITKDGVSVAKEVELKDSLENMGASLVREVASKTADQAGDGTTTATVLAHAIFKEGLRNITAGANPIEVKRGMDKACEAIVAELKKLSREVKDKKEIAQVATISANSDEKIGNLIADAMEKVGKDGVITVEEAKSINDELNVVEGMQFDRGYLSPYFITNAEKMTVELSSPYILLFDKKITNLKDLLPVLEQIQKTGKPLLIIAEDIEGEALATLVVNKLRGVLNISAVKAPGFGDRRKAMLEDIAILTGGEVISEELGRTLESATIQDLGQASSVIIDKDNTTIVNGAGEKANIDARVNQIKAQIAETTSDYDREKLQERLAKLSGGVAVIKVGAATETEMKEKKDRVDDALSATKAAVEEGIVIGGGAALIKAKAKIKLDLQGDEAIGAAIVERALRAPLRQIAENAGFDAGVVVNSVENAKDENTGFDAAKGEYVNMLESGIIDPVKVERVALLNAVSVASMLLTTEATISEIKEDKPTMPDMSGMGGMGGMGGMM.

ATP contacts are provided by residues 29 to 32 (TMGP), Lys-50, 86 to 90 (DGTTT), Gly-414, 477 to 479 (DAA), and Asp-493.

It belongs to the chaperonin (HSP60) family. Forms a cylinder of 14 subunits composed of two heptameric rings stacked back-to-back. Interacts with the co-chaperonin GroES.

It is found in the cytoplasm. It carries out the reaction ATP + H2O + a folded polypeptide = ADP + phosphate + an unfolded polypeptide.. Functionally, together with its co-chaperonin GroES, plays an essential role in assisting protein folding. The GroEL-GroES system forms a nano-cage that allows encapsulation of the non-native substrate proteins and provides a physical environment optimized to promote and accelerate protein folding. The chain is Chaperonin GroEL from Campylobacter jejuni subsp. jejuni serotype O:2 (strain ATCC 700819 / NCTC 11168).